A 722-amino-acid chain; its full sequence is Pentatricopeptide repeat-containing protein At4g14820 (722 aa).

PPR repeat units lie at residues 75–109, 110–140, 145–175, 176–210, 211–245, 246–276, 277–307, 308–342, 343–377, 378–408, 409–443, 444–479, and 480–514; these read ESIV…GGRL, DQFS…AFKI, DPFV…MSHR, DVVT…NVMP, DEMI…DVRM, DTHL…MSVR, NLFV…TEKK, DLVC…GIKP, DVVS…GLES, ELSI…MPRR, NVVS…NVEP, NEVT…NITP, and KLEH…SNVV. Residues 515-590 are type E motif; the sequence is IWGSLMSACR…EKGLSRIDQN (76 aa). Positions 591–621 are type E(+) motif; that stretch reads GKSHEFLIGDKRHKQSNEIYAKLDEVVSKLK. The type DYW motif stretch occupies residues 622-722; that stretch reads LAGYVPDCGS…NGLCSCRDYW (101 aa).

It belongs to the PPR family. PCMP-H subfamily.

This chain is Pentatricopeptide repeat-containing protein At4g14820 (PCMP-H3), found in Arabidopsis thaliana (Mouse-ear cress).